A 384-amino-acid polypeptide reads, in one-letter code: Flap endonuclease 1 (384 aa).

The N-domain stretch occupies residues 1–108 (MGIHKLMDLL…GELARRQKAK (108 aa)). D34 contacts Mg(2+). Residue R74 participates in DNA binding. D90, E162, E164, D183, and D185 together coordinate Mg(2+). Residues 126 to 254 (EALKQEQRNL…VNAFKLITEH (129 aa)) form an I-domain region. Residue E162 participates in DNA binding. 2 residues coordinate DNA: G232 and D234. D234 lines the Mg(2+) pocket. Residues 340–384 (AKEHKGSQTRLNDFFKVQPKDTSSTSKASKKPTNTKSANKKGGKK) are disordered. Residues 346 to 354 (SQTRLNDFF) form an interaction with PCNA region. Low complexity predominate over residues 359 to 376 (KDTSSTSKASKKPTNTKS).

The protein belongs to the XPG/RAD2 endonuclease family. FEN1 subfamily. In terms of assembly, interacts with PCNA. Three molecules of FEN1 bind to one PCNA trimer with each molecule binding to one PCNA monomer. PCNA stimulates the nuclease activity without altering cleavage specificity. Mg(2+) serves as cofactor. Post-translationally, phosphorylated. Phosphorylation upon DNA damage induces relocalization to the nuclear plasma.

Its subcellular location is the nucleus. It localises to the nucleolus. It is found in the nucleoplasm. The protein resides in the mitochondrion. In terms of biological role, structure-specific nuclease with 5'-flap endonuclease and 5'-3' exonuclease activities involved in DNA replication and repair. During DNA replication, cleaves the 5'-overhanging flap structure that is generated by displacement synthesis when DNA polymerase encounters the 5'-end of a downstream Okazaki fragment. It enters the flap from the 5'-end and then tracks to cleave the flap base, leaving a nick for ligation. Also involved in the long patch base excision repair (LP-BER) pathway, by cleaving within the apurinic/apyrimidinic (AP) site-terminated flap. Acts as a genome stabilization factor that prevents flaps from equilibrating into structures that lead to duplications and deletions. Also possesses 5'-3' exonuclease activity on nicked or gapped double-stranded DNA, and exhibits RNase H activity. Also involved in replication and repair of rDNA and in repairing mitochondrial DNA. The protein is Flap endonuclease 1 of Tetrahymena thermophila (strain SB210).